We begin with the raw amino-acid sequence, 466 residues long: Asparagine--tRNA ligase (466 aa).

This sequence belongs to the class-II aminoacyl-tRNA synthetase family. As to quaternary structure, homodimer.

The protein localises to the cytoplasm. It carries out the reaction tRNA(Asn) + L-asparagine + ATP = L-asparaginyl-tRNA(Asn) + AMP + diphosphate + H(+). This Idiomarina loihiensis (strain ATCC BAA-735 / DSM 15497 / L2-TR) protein is Asparagine--tRNA ligase.